We begin with the raw amino-acid sequence, 740 residues long: Catalase-peroxidase (740 aa).

Positions 107-229 form a cross-link, tryptophyl-tyrosyl-methioninium (Trp-Tyr) (with M-255); that stretch reads WHAAGTYRIH…LAAVQMGLIY (123 aa). Residue H108 is the Proton acceptor of the active site. A cross-link (tryptophyl-tyrosyl-methioninium (Tyr-Met) (with W-107)) is located at residues 229–255; the sequence is YVNPEGPNGNPDPMAAAVDIRETFRRM. Position 270 (H270) interacts with heme b. The active-site Tryptophan radical intermediate is the W321.

It belongs to the peroxidase family. Peroxidase/catalase subfamily. In terms of assembly, homodimer. It depends on heme b as a cofactor. Formation of the three residue Trp-Tyr-Met cross-link is important for the catalase, but not the peroxidase activity of the enzyme.

The catalysed reaction is H2O2 + AH2 = A + 2 H2O. The enzyme catalyses 2 H2O2 = O2 + 2 H2O. In terms of biological role, bifunctional enzyme with both catalase and broad-spectrum peroxidase activity, oxidizing various electron donors including NADP(H). Protects M.tuberculosis against toxic reactive oxygen species (ROS) including hydrogen peroxide as well as organic peroxides and thus contributes to its survival within host macrophages by countering the phagocyte oxidative burst. Also displays efficient peroxynitritase activity, which may help the bacterium to persist in macrophages. Functionally, catalyzes the oxidative activation of the antitubercular pro-drug isoniazid (INH) to generate an isonicotinoyl radical that then reacts nonenzymatically with NAD to form an isonicotinoyl-NAD adduct which inhibits InhA. The polypeptide is Catalase-peroxidase (Mycobacterium tuberculosis (strain CDC 1551 / Oshkosh)).